We begin with the raw amino-acid sequence, 413 residues long: Aspartate aminotransferase, cytoplasmic (413 aa).

L-aspartate contacts are provided by glycine 39, tryptophan 141, and asparagine 195. Lysine 259 carries the N6-(pyridoxal phosphate)lysine modification. Arginine 387 contributes to the L-aspartate binding site.

It belongs to the class-I pyridoxal-phosphate-dependent aminotransferase family. As to quaternary structure, homodimer. Requires pyridoxal 5'-phosphate as cofactor.

It localises to the cytoplasm. It catalyses the reaction L-aspartate + 2-oxoglutarate = oxaloacetate + L-glutamate. The enzyme catalyses L-cysteine + 2-oxoglutarate = 2-oxo-3-sulfanylpropanoate + L-glutamate. It carries out the reaction (2S)-2-aminobutanoate + 2-oxoglutarate = 2-oxobutanoate + L-glutamate. The catalysed reaction is 3-sulfino-L-alanine + 2-oxoglutarate = 3-sulfinopyruvate + L-glutamate. In terms of biological role, biosynthesis of L-glutamate from L-aspartate or L-cysteine. Important regulator of levels of glutamate, the major excitatory neurotransmitter of the vertebrate central nervous system. Acts as a scavenger of glutamate in brain neuroprotection. The aspartate aminotransferase activity is involved in hepatic glucose synthesis during development and in adipocyte glyceroneogenesis. Using L-cysteine as substrate, regulates levels of mercaptopyruvate, an important source of hydrogen sulfide. Mercaptopyruvate is converted into H(2)S via the action of 3-mercaptopyruvate sulfurtransferase (3MST). Hydrogen sulfide is an important synaptic modulator and neuroprotectant in the brain. In Sus scrofa (Pig), this protein is Aspartate aminotransferase, cytoplasmic.